We begin with the raw amino-acid sequence, 1431 residues long: Collagen alpha-1(XVII) chain (1431 aa).

The Cytoplasmic segment spans residues 1-468 (MDVTKKNKRD…AWCPCGSCCS (468 aa)). The segment at 1 to 569 (MDVTKKNKRD…MTEQENGNLR (569 aa)) is nonhelical region (NC16). Disordered stretches follow at residues 25–155 (TRLT…PSTR), 167–188 (KGSR…PIPK), 304–324 (TAYG…TGVS), and 422–449 (SVEN…GGGG). Over residues 60–74 (GSSGYINSSGSIRGN) the composition is skewed to low complexity. Polar residues-rich tracts occupy residues 75–96 (ASTS…SPGS), 111–120 (EGSSSGNSSP), and 170–184 (RSAS…SSTL). The segment at 146-231 (RLQSASPSTR…WSSTLPAGSS (86 aa)) is necessary for interaction with DST and for the recruitment of DST to hemidesmosome. Gly residues predominate over residues 430–449 (RGGGSGGGARGGGGSGGGGG). A helical; Signal-anchor for type II membrane protein transmembrane segment spans residues 469-489 (WWKWLLGLLLTWLLLLGLLFG). Over 490 to 1431 (LIALAEEVRK…RRRRSIAIKP (942 aa)) the chain is Extracellular. Phosphoserine; by CK2 is present on Ser547. Disordered stretches follow at residues 564 to 869 (ENGN…SFIS), 884 to 996 (DLRG…SSSG), 1158 to 1178 (DIIG…PGVS), and 1208 to 1249 (FIIG…SSSV). Positions 570–1417 (GNPGPKGDMG…KGDKGDKGDQ (848 aa)) are triple-helical region. 3 stretches are compositionally biased toward low complexity: residues 657 to 673 (PRGL…RGPN), 738 to 751 (EPGA…AGPD), and 778 to 799 (PGKP…PGRP). 6 stretches are compositionally biased toward pro residues: residues 823–844 (PGPP…PGPA), 889–911 (LGPP…PRGP), 937–946 (PPGPPGPPGP), 979–989 (PPGPPGPPGPP), 1162–1174 (PPGP…PRGP), and 1212–1221 (PPGPPGPQGP). A glycan (N-linked (GlcNAc...) asparagine) is linked at Asn1230. Over residues 1232-1249 (SWGSSSSARRGTAYSSSV) the composition is skewed to polar residues. Asn1356 is a glycosylation site (N-linked (GlcNAc...) asparagine). Positions 1366-1431 (RTHGAIPGPP…RRRRSIAIKP (66 aa)) are disordered. Residues 1407–1416 (QKGDKGDKGD) show a composition bias toward basic and acidic residues. A nonhelical region (NC1) region spans residues 1418–1431 (VYTGRRRRSIAIKP). Residues 1421 to 1431 (GRRRRSIAIKP) are compositionally biased toward basic residues.

In terms of assembly, homotrimers of alpha 1(XVII)chains. Interacts (via cytoplasmic region) with ITGB4 (via cytoplasmic region). Interacts (via cytoplasmic region) with DST (via N-terminus). Interacts (via N-terminus) with PLEC. Interacts (via cytoplasmic region) with DSP. In terms of processing, the intracellular/endo domain is disulfide-linked. Prolines at the third position of the tripeptide repeating unit (G-X-Y) are hydroxylated in some or all of the chains. Post-translationally, the ectodomain is shedded from the surface of keratinocytes resulting in a 120-kDa soluble form, also named as 120 kDa linear IgA disease antigen homolog. The shedding is mediated by membrane-bound metalloproteases. This cleavage is inhibited by phosphorylation at Ser-547.

The protein localises to the cell junction. It is found in the hemidesmosome. Its subcellular location is the membrane. It localises to the secreted. The protein resides in the extracellular space. The protein localises to the extracellular matrix. It is found in the basement membrane. Its function is as follows. May play a role in the integrity of hemidesmosome and the attachment of basal keratinocytes to the underlying basement membrane. Functionally, the 120 kDa linear IgA disease antigen homolog is an anchoring filament component involved in dermal-epidermal cohesion. The protein is Collagen alpha-1(XVII) chain (COL17A1) of Mesocricetus auratus (Golden hamster).